A 307-amino-acid polypeptide reads, in one-letter code: MTDSTYDVARVRTYLQGLQTRIADALGALDGTPLATDTWQRGPAERLRGGGCTRILEGGRVFERAGIGFSDVAGDALPPSASAARPQLAGRGFEALGVSLVLHPRNPYCPTVHMNVRMLIATKPGEAPVFWFGGGMDLTPVYGFEDDARHFHQTCKDALDPFGIELYPRFKQWCDEYFFLKHRNETRGIGGIFFDDFSEPGFERSFDLMQSVGDAFLHAYLPIVERRAELPYGERERDFQAYRRGRYVEFNLVFDRGTLFGLQSGGRTESILMSMPPVANWRYNWQPEPGSAEARLYSDFLVPRDWV.

Position 99 (S99) interacts with substrate. Positions 103 and 113 each coordinate a divalent metal cation. H113 acts as the Proton donor in catalysis. N115–R117 is a binding site for substrate. A divalent metal cation contacts are provided by H152 and H182. The interval Y247–R282 is important for dimerization. G265 to R267 is a substrate binding site.

Belongs to the aerobic coproporphyrinogen-III oxidase family. In terms of assembly, homodimer. A divalent metal cation is required as a cofactor.

The protein localises to the cytoplasm. It catalyses the reaction coproporphyrinogen III + O2 + 2 H(+) = protoporphyrinogen IX + 2 CO2 + 2 H2O. The protein operates within porphyrin-containing compound metabolism; protoporphyrin-IX biosynthesis; protoporphyrinogen-IX from coproporphyrinogen-III (O2 route): step 1/1. Involved in the heme biosynthesis. Catalyzes the aerobic oxidative decarboxylation of propionate groups of rings A and B of coproporphyrinogen-III to yield the vinyl groups in protoporphyrinogen-IX. This is Oxygen-dependent coproporphyrinogen-III oxidase from Burkholderia cenocepacia (strain ATCC BAA-245 / DSM 16553 / LMG 16656 / NCTC 13227 / J2315 / CF5610) (Burkholderia cepacia (strain J2315)).